A 218-amino-acid polypeptide reads, in one-letter code: Alkylmercury lyase (218 aa).

Belongs to the MerB family.

It carries out the reaction an alkylmercury + H(+) = an alkane + Hg(2+). Its function is as follows. Cleaves the carbon-mercury bond of organomercurials such as phenylmercuric acetate. One product is Hg(2+), which is subsequently detoxified by the mercuric reductase. The chain is Alkylmercury lyase from Clostridium butyricum.